Here is a 496-residue protein sequence, read N- to C-terminus: Glycerol kinase (496 aa).

T12 serves as a coordination point for ADP. Residues T12, T13, and S14 each coordinate ATP. T12 provides a ligand contact to sn-glycerol 3-phosphate. ADP is bound at residue R16. Residues R82, E83, and Y134 each contribute to the sn-glycerol 3-phosphate site. 3 residues coordinate glycerol: R82, E83, and Y134. At H230 the chain carries Phosphohistidine; by HPr. D244 is a binding site for sn-glycerol 3-phosphate. Positions 244 and 245 each coordinate glycerol. ADP-binding residues include T266 and G309. ATP is bound by residues T266, G309, Q313, and G410. Residues G410 and N414 each coordinate ADP.

It belongs to the FGGY kinase family. In terms of assembly, homotetramer and homodimer (in equilibrium). In terms of processing, the phosphoenolpyruvate-dependent sugar phosphotransferase system (PTS), including enzyme I, and histidine-containing protein (HPr) are required for the phosphorylation, which leads to the activation of the enzyme.

It carries out the reaction glycerol + ATP = sn-glycerol 3-phosphate + ADP + H(+). The protein operates within polyol metabolism; glycerol degradation via glycerol kinase pathway; sn-glycerol 3-phosphate from glycerol: step 1/1. With respect to regulation, activated by phosphorylation and inhibited by fructose 1,6-bisphosphate (FBP). Key enzyme in the regulation of glycerol uptake and metabolism. Catalyzes the phosphorylation of glycerol to yield sn-glycerol 3-phosphate. This Bacillus licheniformis (strain ATCC 14580 / DSM 13 / JCM 2505 / CCUG 7422 / NBRC 12200 / NCIMB 9375 / NCTC 10341 / NRRL NRS-1264 / Gibson 46) protein is Glycerol kinase.